The chain runs to 537 residues: CTP synthase (537 aa).

Residues 1-268 form an amidoligase domain region; the sequence is MPFKCIFLTG…STFITEKLGL (268 aa). Position 14 (Ser-14) interacts with CTP. Ser-14 is a binding site for UTP. 15–20 serves as a coordination point for ATP; sequence SLGKGL. An L-glutamine-binding site is contributed by Tyr-55. Asp-72 lines the ATP pocket. Mg(2+) contacts are provided by Asp-72 and Glu-142. CTP is bound by residues 149-151, 188-193, and Lys-224; these read DIE and KTKPTQ. UTP-binding positions include 188-193 and Lys-224; that span reads KTKPTQ. Residues 294–533 enclose the Glutamine amidotransferase type-1 domain; that stretch reads RIGLVGKYVQ…IQAALLYSKN (240 aa). Residue Gly-353 coordinates L-glutamine. The active-site Nucleophile; for glutamine hydrolysis is the Cys-380. Residues 381-384, Glu-404, and Arg-461 contribute to the L-glutamine site; that span reads LGMQ. Active-site residues include His-506 and Glu-508.

The protein belongs to the CTP synthase family. As to quaternary structure, homotetramer.

It catalyses the reaction UTP + L-glutamine + ATP + H2O = CTP + L-glutamate + ADP + phosphate + 2 H(+). It carries out the reaction L-glutamine + H2O = L-glutamate + NH4(+). The catalysed reaction is UTP + NH4(+) + ATP = CTP + ADP + phosphate + 2 H(+). Its pathway is pyrimidine metabolism; CTP biosynthesis via de novo pathway; CTP from UDP: step 2/2. With respect to regulation, allosterically activated by GTP, when glutamine is the substrate; GTP has no effect on the reaction when ammonia is the substrate. The allosteric effector GTP functions by stabilizing the protein conformation that binds the tetrahedral intermediate(s) formed during glutamine hydrolysis. Inhibited by the product CTP, via allosteric rather than competitive inhibition. Its function is as follows. Catalyzes the ATP-dependent amination of UTP to CTP with either L-glutamine or ammonia as the source of nitrogen. Regulates intracellular CTP levels through interactions with the four ribonucleotide triphosphates. The chain is CTP synthase from Chlamydia caviae (strain ATCC VR-813 / DSM 19441 / 03DC25 / GPIC) (Chlamydophila caviae).